A 179-amino-acid chain; its full sequence is Large ribosomal subunit protein uL6 (179 aa).

This sequence belongs to the universal ribosomal protein uL6 family. Part of the 50S ribosomal subunit.

This protein binds to the 23S rRNA, and is important in its secondary structure. It is located near the subunit interface in the base of the L7/L12 stalk, and near the tRNA binding site of the peptidyltransferase center. The sequence is that of Large ribosomal subunit protein uL6 from Syntrophus aciditrophicus (strain SB).